Consider the following 154-residue polypeptide: Ribosomal RNA large subunit methyltransferase H (154 aa).

Residues L76, G103, and 122-127 (LSPLTL) contribute to the S-adenosyl-L-methionine site.

Belongs to the RNA methyltransferase RlmH family. Homodimer.

The protein resides in the cytoplasm. It catalyses the reaction pseudouridine(1915) in 23S rRNA + S-adenosyl-L-methionine = N(3)-methylpseudouridine(1915) in 23S rRNA + S-adenosyl-L-homocysteine + H(+). Its function is as follows. Specifically methylates the pseudouridine at position 1915 (m3Psi1915) in 23S rRNA. The protein is Ribosomal RNA large subunit methyltransferase H of Wolinella succinogenes (strain ATCC 29543 / DSM 1740 / CCUG 13145 / JCM 31913 / LMG 7466 / NCTC 11488 / FDC 602W) (Vibrio succinogenes).